The sequence spans 92 residues: Putative pterin-4-alpha-carbinolamine dehydratase (92 aa).

It belongs to the pterin-4-alpha-carbinolamine dehydratase family.

It catalyses the reaction (4aS,6R)-4a-hydroxy-L-erythro-5,6,7,8-tetrahydrobiopterin = (6R)-L-erythro-6,7-dihydrobiopterin + H2O. The sequence is that of Putative pterin-4-alpha-carbinolamine dehydratase from Acidobacterium capsulatum (strain ATCC 51196 / DSM 11244 / BCRC 80197 / JCM 7670 / NBRC 15755 / NCIMB 13165 / 161).